A 279-amino-acid chain; its full sequence is Putative pyruvate, phosphate dikinase regulatory protein (279 aa).

153-160 (GVSRTSKT) contributes to the ADP binding site.

This sequence belongs to the pyruvate, phosphate/water dikinase regulatory protein family. PDRP subfamily.

It carries out the reaction N(tele)-phospho-L-histidyl/L-threonyl-[pyruvate, phosphate dikinase] + ADP = N(tele)-phospho-L-histidyl/O-phospho-L-threonyl-[pyruvate, phosphate dikinase] + AMP + H(+). The catalysed reaction is N(tele)-phospho-L-histidyl/O-phospho-L-threonyl-[pyruvate, phosphate dikinase] + phosphate + H(+) = N(tele)-phospho-L-histidyl/L-threonyl-[pyruvate, phosphate dikinase] + diphosphate. Bifunctional serine/threonine kinase and phosphorylase involved in the regulation of the pyruvate, phosphate dikinase (PPDK) by catalyzing its phosphorylation/dephosphorylation. The polypeptide is Putative pyruvate, phosphate dikinase regulatory protein (Bradyrhizobium sp. (strain ORS 278)).